The following is a 122-amino-acid chain: Small ribosomal subunit protein uS13 (122 aa).

The tract at residues 97–122 is disordered; sequence PVRGQRTKTNARTRKGPARTVAGKKK.

It belongs to the universal ribosomal protein uS13 family. Part of the 30S ribosomal subunit. Forms a loose heterodimer with protein S19. Forms two bridges to the 50S subunit in the 70S ribosome.

Its function is as follows. Located at the top of the head of the 30S subunit, it contacts several helices of the 16S rRNA. In the 70S ribosome it contacts the 23S rRNA (bridge B1a) and protein L5 of the 50S subunit (bridge B1b), connecting the 2 subunits; these bridges are implicated in subunit movement. Contacts the tRNAs in the A and P-sites. This chain is Small ribosomal subunit protein uS13, found in Geobacter sulfurreducens (strain ATCC 51573 / DSM 12127 / PCA).